A 159-amino-acid polypeptide reads, in one-letter code: Phosphopantetheine adenylyltransferase (159 aa).

Residue threonine 9 coordinates substrate. ATP contacts are provided by residues 9–10 (TF) and histidine 17. The substrate site is built by lysine 41, leucine 73, and arginine 87. ATP-binding positions include 88–90 (GLR), glutamate 98, and 123–129 (YMFISAT).

This sequence belongs to the bacterial CoaD family. Homohexamer. Mg(2+) is required as a cofactor.

It localises to the cytoplasm. It catalyses the reaction (R)-4'-phosphopantetheine + ATP + H(+) = 3'-dephospho-CoA + diphosphate. The protein operates within cofactor biosynthesis; coenzyme A biosynthesis; CoA from (R)-pantothenate: step 4/5. Reversibly transfers an adenylyl group from ATP to 4'-phosphopantetheine, yielding dephospho-CoA (dPCoA) and pyrophosphate. The polypeptide is Phosphopantetheine adenylyltransferase (Nitrosomonas europaea (strain ATCC 19718 / CIP 103999 / KCTC 2705 / NBRC 14298)).